Here is a 468-residue protein sequence, read N- to C-terminus: ATP synthase subunit beta (468 aa).

155 to 162 is an ATP binding site; the sequence is GGAGVGKT.

Belongs to the ATPase alpha/beta chains family. As to quaternary structure, F-type ATPases have 2 components, CF(1) - the catalytic core - and CF(0) - the membrane proton channel. CF(1) has five subunits: alpha(3), beta(3), gamma(1), delta(1), epsilon(1). CF(0) has three main subunits: a(1), b(2) and c(9-12). The alpha and beta chains form an alternating ring which encloses part of the gamma chain. CF(1) is attached to CF(0) by a central stalk formed by the gamma and epsilon chains, while a peripheral stalk is formed by the delta and b chains.

It is found in the cell membrane. It carries out the reaction ATP + H2O + 4 H(+)(in) = ADP + phosphate + 5 H(+)(out). Functionally, produces ATP from ADP in the presence of a proton gradient across the membrane. The catalytic sites are hosted primarily by the beta subunits. The chain is ATP synthase subunit beta from Bacillus cereus (strain ATCC 10987 / NRS 248).